A 146-amino-acid polypeptide reads, in one-letter code: Arginine repressor (146 aa).

It belongs to the ArgR family.

The protein resides in the cytoplasm. It functions in the pathway amino-acid biosynthesis; L-arginine biosynthesis [regulation]. Its function is as follows. Regulates arginine biosynthesis genes. The protein is Arginine repressor of Parabacteroides distasonis (strain ATCC 8503 / DSM 20701 / CIP 104284 / JCM 5825 / NCTC 11152).